Reading from the N-terminus, the 470-residue chain is Desmin (470 aa).

Positions 2–108 are head; that stretch reads SQAYSSSQRV…QEFLTTRTNE (107 aa). A Phosphoserine; by CDK1 modification is found at Ser-7. Residue Ser-12 is modified to Phosphoserine; by AURKB. Arg-16 is subject to Omega-N-methylarginine. Thr-17 carries the phosphothreonine; by AURKB and ROCK1 modification. Ser-28 carries the phosphoserine; by CDK1 modification. Ser-31 is modified (phosphoserine). Residue Ser-32 is modified to Phosphoserine; by CDK1. An Asymmetric dimethylarginine; alternate modification is found at Arg-37. Arg-37 is modified (omega-N-methylarginine; alternate). Ser-45 carries the post-translational modification Phosphoserine. Arg-58 is subject to ADP-ribosylarginine. The residue at position 60 (Ser-60) is a Phosphoserine; by AURKB. Ser-68 carries the post-translational modification Phosphoserine. Omega-N-methylarginine is present on Arg-70. Thr-76 and Thr-77 each carry phosphothreonine; by ROCK1. A Phosphoserine modification is found at Ser-81. Residues 108-416 enclose the IF rod domain; that stretch reads EKVELQELND…KLLEGEESRI (309 aa). Residues 109 to 141 are coil 1A; it reads KVELQELNDRFANYIEKVRFLEQQNAALAAEVN. The tract at residues 142-151 is linker 1; it reads RLKGREPTRV. Residues 152–252 form a coil 1B region; the sequence is AELYEEELRE…HEEEIRELQA (101 aa). The linker 12 stretch occupies residues 253-268; that stretch reads QLQEQQVQVEMDMSKP. The interval 268–415 is interaction with NEB; that stretch reads PDLTAALRDI…RKLLEGEESR (148 aa). Residues 269 to 287 form a coil 2A region; the sequence is DLTAALRDIRAQYETIAAK. The interval 288-295 is linker 2; the sequence is NISEAEEW. Residues Ser-290, Ser-358, Ser-361, and Ser-424 each carry the phosphoserine modification. Residues 296–412 form a coil 2B region; sequence YKSKVSDLTQ…ATYRKLLEGE (117 aa). The tail stretch occupies residues 413 to 470; it reads ESRINLPIQTYSALNFRETSPEQRGSEVHTKKTVMIKTIETRDGEVVSEATQQQHEVL. Residues 438 to 453 form an interaction with CRYAB region; the sequence is SEVHTKKTVMIKTIET.

It belongs to the intermediate filament family. In terms of assembly, homomer. Interacts with DST. Interacts with MTM1. Interacts with EPPK1; interaction is dependent of higher-order structure of intermediate filament. Interacts with CRYAB. Interacts with NEB (via nebulin repeats 160-164). Interacts (via rod region) with NEBL (via nebulin repeats 1-5). Interacts with ASB2 isoform 1; the interaction targets DES for proteasomal degradation. Interacts with PLEC isoform 1C. Interacts with PKP1. Interacts with FLII. Post-translationally, ADP-ribosylation prevents ability to form intermediate filaments. Phosphorylation at Ser-7, Ser-28 and Ser-32 by CDK1, phosphorylation at Ser-60 by AURKB and phosphorylation at Thr-76 by ROCK1 contribute to efficient separation of desmin intermediate filaments during mitosis. In terms of processing, ubiquitination by a SCF-like complex containing ASB2 isoform 1 leads to proteasomal degradation.

The protein localises to the cytoplasm. It localises to the myofibril. Its subcellular location is the sarcomere. It is found in the z line. The protein resides in the cell membrane. The protein localises to the sarcolemma. It localises to the nucleus. Its subcellular location is the cell tip. It is found in the nucleus envelope. In terms of biological role, muscle-specific type III intermediate filament essential for proper muscular structure and function. Plays a crucial role in maintaining the structure of sarcomeres, inter-connecting the Z-disks and forming the myofibrils, linking them not only to the sarcolemmal cytoskeleton, but also to the nucleus and mitochondria, thus providing strength for the muscle fiber during activity. In adult striated muscle they form a fibrous network connecting myofibrils to each other and to the plasma membrane from the periphery of the Z-line structures. May act as a sarcomeric microtubule-anchoring protein: specifically associates with detyrosinated tubulin-alpha chains, leading to buckled microtubules and mechanical resistance to contraction. Required for nuclear membrane integrity, via anchoring at the cell tip and nuclear envelope, resulting in maintenance of microtubule-derived intracellular mechanical forces. Contributes to the transcriptional regulation of the NKX2-5 gene in cardiac progenitor cells during a short period of cardiomyogenesis and in cardiac side population stem cells in the adult. Plays a role in maintaining an optimal conformation of nebulette (NEB) on heart muscle sarcomeres to bind and recruit cardiac alpha-actin. This Homo sapiens (Human) protein is Desmin (DES).